A 203-amino-acid chain; its full sequence is MELDAVSRSYKRWAIYDFSFGKVSESPRRRTAAHVNARGGRVLEVGVGTGLSLPLYSHRVAVTGIDFSHEMLARAREKVEEMGLEPVKELRQMDARELDFPDETFDTVVAMFLVSVVPEPERVVSEMARVCRKGGEVVIVNHFARDKGPLAAVEKALARFENTLGWHSDFAIERVTADPRLEVVEQTPMSPGGLFTFLRFQRR.

It carries out the reaction a 1,2-diacyl-sn-glycero-3-phosphoethanolamine + S-adenosyl-L-methionine = a 1,2-diacyl-sn-glycero-3-phospho-N-methylethanolamine + S-adenosyl-L-homocysteine + H(+). It participates in phospholipid metabolism; phosphatidylcholine biosynthesis. This enzyme catalyzes three distinct methylation reactions for converting phosphatidylethanolamine to phosphatidylcholine. In Cereibacter sphaeroides (Rhodobacter sphaeroides), this protein is Phosphatidylethanolamine N-methyltransferase (pmtA).